A 256-amino-acid chain; its full sequence is Anamorsin homolog (256 aa).

The tract at residues 1-136 (MNSLSLELNK…DTNESSTINI (136 aa)) is N-terminal SAM-like domain. Residues 126-148 (WDTNESSTINIPSTSSNNPWASI) are disordered. Positions 131 to 144 (SSTINIPSTSSNNP) are enriched in low complexity. Residues 137 to 166 (PSTSSNNPWASIEGGDRINENDLVSENDKT) are linker. [2Fe-2S] cluster contacts are provided by Cys-176, Cys-185, Cys-188, and Cys-190. Residues 176–190 (CEVGKTKKACKNCTC) are fe-S binding site A. 4 residues coordinate [4Fe-4S] cluster: Cys-217, Cys-220, Cys-228, and Cys-231. Short sequence motifs (cx2C motif) lie at residues 217–220 (CGNC) and 228–231 (CGGC). A fe-S binding site B region spans residues 217–231 (CGNCSLGDAFRCGGC).

Belongs to the anamorsin family. In terms of assembly, monomer. Requires [2Fe-2S] cluster as cofactor. It depends on [4Fe-4S] cluster as a cofactor.

Its subcellular location is the cytoplasm. It localises to the mitochondrion intermembrane space. Functionally, component of the cytosolic iron-sulfur (Fe-S) protein assembly (CIA) machinery. Required for the maturation of extramitochondrial Fe-S proteins. Part of an electron transfer chain functioning in an early step of cytosolic Fe-S biogenesis, facilitating the de novo assembly of a [4Fe-4S] cluster on the cytosolic Fe-S scaffold complex. Electrons are transferred from NADPH via a FAD- and FMN-containing diflavin oxidoreductase. Together with the diflavin oxidoreductase, also required for the assembly of the diferric tyrosyl radical cofactor of ribonucleotide reductase (RNR), probably by providing electrons for reduction during radical cofactor maturation in the catalytic small subunit. This Dictyostelium discoideum (Social amoeba) protein is Anamorsin homolog (rsc43).